A 274-amino-acid chain; its full sequence is Tyrosinase (274 aa).

Residues His-38, His-54, His-63, His-190, His-194, and His-216 each coordinate Cu cation.

Belongs to the tyrosinase family. Cu(2+) is required as a cofactor.

It carries out the reaction 2 L-dopa + O2 = 2 L-dopaquinone + 2 H2O. It catalyses the reaction L-tyrosine + O2 = L-dopaquinone + H2O. This is a copper-containing oxidase that functions in the formation of pigments such as melanins and other polyphenolic compounds. This chain is Tyrosinase (melC2), found in Streptomyces glaucescens.